The sequence spans 4538 residues: Polyketide synthase PksL (4538 aa).

The N-terminal hotdog fold 1 stretch occupies residues 1-123 (MRWRSNVKKI…ADMHADSPAI (123 aa)). The PKS/mFAS DH 1 domain occupies 1–285 (MRWRSNVKKI…SKLVREAELI (285 aa)). The active-site Proton acceptor; for dehydratase activity 1 is the histidine 26. Residues 138–285 (QNVVQLDDVY…SKLVREAELI (148 aa)) are C-terminal hotdog fold 1. Aspartate 199 serves as the catalytic Proton donor; for dehydratase activity 1. Residues 289 to 314 (HQDAQETQMTRADTAERDKPADMVSS) form a disordered region. The Carrier 1 domain maps to 320–394 (SEAEQFVSQL…ELSAFLAEEY (75 aa)). Serine 354 bears the O-(pantetheine 4'-phosphoryl)serine mark. The 439-residue stretch at 433 to 871 (AGDIAIIGLA…GSNAHIILEE (439 aa)) folds into the Ketosynthase family 3 (KS3) 1 domain. Active-site for beta-ketoacyl synthase 1 activity residues include cysteine 609, histidine 744, and histidine 784. A dehydratase region spans residues 1048–1226 (HILHPLLHQN…DSLYAGENGV (179 aa)). The tract at residues 1051-1175 (HPLLHQNVSD…GSAVLCEAGE (125 aa)) is N-terminal hotdog fold 2. Residues 1051–1340 (HPLLHQNVSD…ARVLETDQEG (290 aa)) form the PKS/mFAS DH 2 domain. Residue histidine 1080 is the Proton acceptor; for dehydratase activity 2 of the active site. The segment at 1189-1340 (NGRTLSPFDC…ARVLETDQEG (152 aa)) is C-terminal hotdog fold 2. The active-site Proton donor; for dehydratase activity 2 is aspartate 1251. The segment at 1520–1713 (KGVYLITGGA…WKDGGMQIDA (194 aa)) is beta-ketoacyl reductase 1. A Carrier 2 domain is found at 1800–1873 (EKAENYFKQV…SLTRYFIDSR (74 aa)). An O-(pantetheine 4'-phosphoryl)serine modification is found at serine 1834. The Ketosynthase family 3 (KS3) 2 domain occupies 1926–2365 (TEEIAIIGIS…GVNAHILIEE (440 aa)). Active-site for beta-ketoacyl synthase 2 activity residues include cysteine 2103, histidine 2238, and histidine 2278. A disordered region spans residues 2546 to 2568 (TEEPFAPVQPVIPKPSVDREASG). Carrier domains follow at residues 2597–2674 (ITAE…AHEL) and 2738–2815 (VAIE…KSEL). O-(pantetheine 4'-phosphoryl)serine is present on residues serine 2634 and serine 2775. The disordered stretch occupies residues 2828–2854 (SFEAAQQKPAASSHPKPAERPLQPVQH). Residues 2873–3294 (EDAIAIVGMS…GTNAHIVIEE (422 aa)) form the Ketosynthase family 3 (KS3) 3 domain. Active-site for beta-ketoacyl synthase 3 activity residues include cysteine 3040, histidine 3175, and histidine 3215. The beta-ketoacyl reductase 2 stretch occupies residues 3686–3887 (DKVLLITGGT…PNWKETGLGE (202 aa)). One can recognise a Carrier 5 domain in the interval 3960-4037 (NLFPETVDWL…SFAHWLISKY (78 aa)). An O-(pantetheine 4'-phosphoryl)serine modification is found at serine 3997. The Ketosynthase family 3 (KS3) 4 domain maps to 4082 to 4485 (AEDIAIIGLS…GTNAHLIIEG (404 aa)). Catalysis depends on cysteine 4237, which acts as the For beta-ketoacyl synthase 4 activity.

Pantetheine 4'-phosphate serves as cofactor.

The protein localises to the cytoplasm. It functions in the pathway antibiotic biosynthesis; bacillaene biosynthesis. In terms of biological role, involved in some intermediate steps for the synthesis of the antibiotic polyketide bacillaene which is involved in secondary metabolism. In Bacillus subtilis (strain 168), this protein is Polyketide synthase PksL (pksL).